The sequence spans 374 residues: MLSTSRSRFIRNTNESGEEVTTFFDYDYGAPCHKFDVKQIGAQLLPPLYSLVFIFGFVGNMLVVLILINCKKLKCLTDIYLLNLAISDLLFLITLPLWAHSAANEWVFGNAMCKLFTGLYHIGYFGGIFFIILLTIDRYLAIVHAVFALKARTVTFGVVTSVITWLVAVFASVPGIIFTKCQKEDSVYVCGPYFPRGWNNFHTIMRNILGLVLPLLIMVICYSGILKTLLRCRNEKKRHRAVRVIFTIMIVYFLFWTPYNIVILLNTFQEFFGLSNCESTSQLDQATQVTETLGMTHCCINPIIYAFVGEKFRSLFHIALGCRIAPLQKPVCGGPGVRPGKNVKVTTQGLLDGRGKGKSIGRAPEASLQDKEGA.

The Extracellular segment spans residues 1-42 (MLSTSRSRFIRNTNESGEEVTTFFDYDYGAPCHKFDVKQIGA). Asn14 carries an N-linked (GlcNAc...) asparagine glycan. Tyr26 carries the post-translational modification Sulfotyrosine. A helical membrane pass occupies residues 43–70 (QLLPPLYSLVFIFGFVGNMLVVLILINC). Residues 71 to 80 (KKLKCLTDIY) are Cytoplasmic-facing. Residues 81–100 (LLNLAISDLLFLITLPLWAH) traverse the membrane as a helical segment. The Extracellular segment spans residues 101 to 114 (SAANEWVFGNAMCK). Cysteines 113 and 190 form a disulfide. A helical membrane pass occupies residues 115-136 (LFTGLYHIGYFGGIFFIILLTI). The Cytoplasmic portion of the chain corresponds to 137–153 (DRYLAIVHAVFALKART). Tyr139 is modified (phosphotyrosine; by JAK2). A helical membrane pass occupies residues 154-178 (VTFGVVTSVITWLVAVFASVPGIIF). Topologically, residues 179-206 (TKCQKEDSVYVCGPYFPRGWNNFHTIMR) are extracellular. A helical membrane pass occupies residues 207–226 (NILGLVLPLLIMVICYSGIL). Topologically, residues 227–243 (KTLLRCRNEKKRHRAVR) are cytoplasmic. The chain crosses the membrane as a helical span at residues 244–268 (VIFTIMIVYFLFWTPYNIVILLNTF). At 269–285 (QEFFGLSNCESTSQLDQ) the chain is on the extracellular side. A helical transmembrane segment spans residues 286-309 (ATQVTETLGMTHCCINPIIYAFVG). Over 310–374 (EKFRSLFHIA…EASLQDKEGA (65 aa)) the chain is Cytoplasmic. Residues 348-374 (QGLLDGRGKGKSIGRAPEASLQDKEGA) are disordered.

It belongs to the G-protein coupled receptor 1 family. As to quaternary structure, interacts with ARRB1. Interacts (via extracellular N-terminal region) with beta-defensin DEFB106A/DEFB106B; this interaction may preferentially require specific tyrosine sulfation on CCR2. Interacts with NUP85; the interaction is required for CCR2 clusters formation on the cell membrane and CCR2 signaling. In terms of assembly, (Microbial infection) Binds to HIV-1 Tat. N-glycosylated. Post-translationally, sulfation increases the affinity for both monomeric and dimeric CCL2 with stronger binding to the monomeric form. Binding of sulfated CCR2 to CCL2 promotes conversion of CCL2 from dimer to monomer. In terms of tissue distribution, expressed by monocytes and IL2-activated NK cells. Abundantly expressed on CD14+/CD16- monocytes and weakly on CD14+/CD16+ monocytes, type 2 dendritic cells (DCs) and plasmacytoid DCs (at protein level).

The protein resides in the cell membrane. Key functional receptor for CCL2 but can also bind CCL7, and CCL12. Also transduces signaling mediated by CCL13. Its binding with CCL2 on monocytes and macrophages mediates chemotaxis and migration induction through the activation of the PI3K cascade, the small G protein Rac and lamellipodium protrusion. Also acts as a receptor for the beta-defensin DEFB106A/DEFB106B. Regulates the expression of T-cell inflammatory cytokines and T-cell differentiation, promoting the differentiation of T-cells into T-helper 17 cells (Th17) during inflammation. Facilitates the export of mature thymocytes by enhancing directional movement of thymocytes to sphingosine-1-phosphate stimulation and up-regulation of S1P1R expression; signals through the JAK-STAT pathway to regulate FOXO1 activity leading to an increased expression of S1P1R. Plays an important role in mediating peripheral nerve injury-induced neuropathic pain. Increases NMDA-mediated synaptic transmission in both dopamine D1 and D2 receptor-containing neurons, which may be caused by MAPK/ERK-dependent phosphorylation of GRIN2B/NMDAR2B. Mediates the recruitment of macrophages and monocytes to the injury site following brain injury. Its function is as follows. (Microbial infection) Alternative coreceptor with CD4 for HIV-1 infection. The protein is C-C chemokine receptor type 2 (CCR2) of Homo sapiens (Human).